The sequence spans 174 residues: Protein GrpE (174 aa).

Positions 1 to 35 (MAQDIKNEEVEEVQEEEVVETAEETTPEKSELDLA) are disordered. The span at 9–25 (EVEEVQEEEVVETAEET) shows a compositional bias: acidic residues. A compositionally biased stretch (basic and acidic residues) spans 26–35 (TPEKSELDLA).

The protein belongs to the GrpE family. In terms of assembly, homodimer.

It is found in the cytoplasm. Participates actively in the response to hyperosmotic and heat shock by preventing the aggregation of stress-denatured proteins, in association with DnaK and GrpE. It is the nucleotide exchange factor for DnaK and may function as a thermosensor. Unfolded proteins bind initially to DnaJ; upon interaction with the DnaJ-bound protein, DnaK hydrolyzes its bound ATP, resulting in the formation of a stable complex. GrpE releases ADP from DnaK; ATP binding to DnaK triggers the release of the substrate protein, thus completing the reaction cycle. Several rounds of ATP-dependent interactions between DnaJ, DnaK and GrpE are required for fully efficient folding. In Streptococcus pneumoniae (strain ATCC BAA-255 / R6), this protein is Protein GrpE.